Here is a 406-residue protein sequence, read N- to C-terminus: MSYEKLLERFLTYVKINTRSNPNSTQTPTTQSQVDFALTVLKPEMEAIGLKDVHYLPSNGYLVGTLPATSDRLCHKIGFISHMDTADFNAENITPQIVDYKGGDIELGDSGYILSPKDFPNLNNYHGQTLITTDGKTLLGADDKSGIAEIMTAMEYLASHPEIEHCEIRVGFGPDEEIGIGADKFDVKDFDVDFAYTVDGGPLGELQYETFSAAGLELTFEGRNVHPGTAKNQMINALQLAMDFHSQLPENERPEQTDGYQGFYHLYDLSGTVDQAKSSYIIRDFEEVNFLKRKHLAQDIADNMNEALQSERVKVKLYDQYYNMKKVIEKDMTPINIAKEVMEELDIKPIIEPIRGGTDGSKISFMGIPTPNLFAGGENMHGRFEFVSLQTMEKAVDVILGIVAKD.

Position 82 (His-82) interacts with Zn(2+). The active site involves Asp-84. Asp-142 contacts Zn(2+). Glu-176 functions as the Proton acceptor in the catalytic mechanism. Zn(2+) contacts are provided by Glu-177, Asp-199, and His-381.

It belongs to the peptidase M20B family. Zn(2+) is required as a cofactor.

It localises to the cytoplasm. The enzyme catalyses Release of the N-terminal residue from a tripeptide.. Its function is as follows. Cleaves the N-terminal amino acid of tripeptides. The protein is Peptidase T of Streptococcus agalactiae serotype III (strain NEM316).